Consider the following 216-residue polypeptide: Probable GTP-binding protein EngB (216 aa).

In terms of domain architecture, EngB-type G spans Gly37–Glu214. Residues Gly45–Ser52, Gly72–Glu76, Asp92–Gly95, Thr159–Asp162, and Thr193–Ser195 contribute to the GTP site. Residues Ser52 and Thr74 each coordinate Mg(2+).

This sequence belongs to the TRAFAC class TrmE-Era-EngA-EngB-Septin-like GTPase superfamily. EngB GTPase family. Mg(2+) serves as cofactor.

Necessary for normal cell division and for the maintenance of normal septation. The chain is Probable GTP-binding protein EngB from Rhodopseudomonas palustris (strain ATCC BAA-98 / CGA009).